The following is a 271-amino-acid chain: uncharacterized protein (271 aa).

3 Solcar repeats span residues valine 3–arginine 74, glutamate 81–tyrosine 163, and aspartate 171–lysine 268. The next 6 membrane-spanning stretches (helical) occupy residues threonine 5 to isoleucine 26, glycine 49 to valine 69, isoleucine 84 to leucine 104, glycine 138 to glutamate 158, tryptophan 170 to isoleucine 190, and phenylalanine 240 to valine 261.

Belongs to the mitochondrial carrier (TC 2.A.29) family.

It is found in the mitochondrion inner membrane. This is an uncharacterized protein from Schizosaccharomyces pombe (strain 972 / ATCC 24843) (Fission yeast).